Here is an 876-residue protein sequence, read N- to C-terminus: Beta-glucosidase 1 (876 aa).

The N-terminal stretch at 1-17 (MLMIVQLLVFALGLAVA) is a signal peptide. 4 N-linked (GlcNAc...) asparagine glycosylation sites follow: N22, N75, N224, and N267. The active site involves D295. 10 N-linked (GlcNAc...) asparagine glycosylation sites follow: N332, N339, N372, N389, N426, N544, N585, N739, N780, and N790.

This sequence belongs to the glycosyl hydrolase 3 family.

It carries out the reaction Hydrolysis of terminal, non-reducing beta-D-glucosyl residues with release of beta-D-glucose.. It functions in the pathway glycan metabolism; cellulose degradation. The protein is Beta-glucosidase 1 (BGL1) of Saccharomycopsis fibuligera (Yeast).